Here is a 176-residue protein sequence, read N- to C-terminus: Transcriptional repressor MprA (176 aa).

One can recognise an HTH marR-type domain in the interval glutamate 26–serine 160.

Negative regulator of the multidrug operon emrAB. This is Transcriptional repressor MprA (mprA) from Escherichia coli O157:H7.